The sequence spans 654 residues: Endoplasmic reticulum chaperone BiP (654 aa).

The N-terminal stretch at Met1 to Ala18 is a signal peptide. Residues Met1–Ala80 are required for interaction with ELAPOR1. Gly36–Tyr39 lines the ATP pocket. Residue Ser86 is modified to Phosphoserine. Residue Lys96 participates in ATP binding. The residue at position 125 (Lys125) is an N6-acetyllysine. The segment at Lys125–Lys280 is nucleotide-binding (NBD). Tyr160 is modified (3'-nitrotyrosine). Lys213 bears the N6-acetyllysine mark. Gly227 to Thr229 is a binding site for ATP. Position 271 is an N6-acetyllysine (Lys271). Glu293 to Ser300 is a binding site for ATP. Lys326 is subject to N6-acetyllysine. A Glycyl lysine isopeptide (Lys-Gly) (interchain with G-Cter in SUMO2) cross-link involves residue Lys352. Position 353 is an N6-acetyllysine; alternate (Lys353). Lys353 is covalently cross-linked (Glycyl lysine isopeptide (Lys-Gly) (interchain with G-Cter in SUMO1); alternate). An ATP-binding site is contributed by Gly364–Arg367. Positions Gln409–Val419 are interdomain linker. The substrate-binding (SBD) stretch occupies residues Cys420–Thr500. Lys447 carries the N6-succinyllysine modification. Arg492 bears the Omega-N-methylarginine mark. Thr518 is subject to O-AMP-threonine; alternate. Thr518 carries the post-translational modification Phosphothreonine; alternate. Residue Lys585 is modified to N6,N6,N6-trimethyllysine; by METTL21A; in vitro. The residue at position 585 (Lys585) is an N6,N6-dimethyllysine; alternate. Residue Lys585 is modified to N6-methyllysine; alternate. An N6-methyllysine modification is found at Lys591. Positions Lys633–Leu654 are disordered. A phosphothreonine mark is found at Thr643 and Thr648. Residues Gly644–Leu654 are compositionally biased toward acidic residues. The short motif at Lys651–Leu654 is the Prevents secretion from ER element.

It belongs to the heat shock protein 70 family. In terms of assembly, monomer and homooligomer; homooligomerization via the interdomain linker inactivates the chaperone activity and acts as a storage of HSPA5/BiP molecules. Interacts with DNAJC1 (via J domain). Component of an EIF2 complex at least composed of CELF1/CUGBP1, CALR, CALR3, EIF2S1, EIF2S2, HSP90B1 and HSPA5. Part of a large chaperone multiprotein complex comprising DNAJB11, HSP90B1, HSPA5, HYOU, PDIA2, PDIA4, PDIA6, PPIB, SDF2L1, UGGT1 and very small amounts of ERP29, but not, or at very low levels, CALR nor CANX. Interacts with TMEM132A and TRIM21. May form a complex with ERLEC1, OS9, SEL1L and SYVN1. Interacts with DNAJC10. Interacts with DNAJB9/ERdj4; leading to recruit HSPA5/BiP to ERN1/IRE1. Interacts with ERN1/IRE1 (via luminal domain); the interaction takes place following interaction with DNAJB9/ERdj4 and leads to inactivate ERN1/IRE1, the interaction also competitively inhibits ERN1 interaction with MANF. Interacts directly with MANF (via SAP domain); the interaction inhibits ATP binding to HSPA5/BiP and subsequent nucleotide exchange. Interacts with EIF2AK3/PERK (via luminal domain); interaction leads to inactivate EIF2AK3/PERK. Interacts with MX1. Interacts with METTL23. Interacts with CEMIP; the interaction induces calcium leakage from the endoplasmic reticulum and cell migration. Interacts with PCSK4 form; the interaction takes place in the endoplasmic reticulum. Interacts with CIPC. Interacts with CCDC88B (via C-terminus); the interaction opposes ERN1-mediated JNK activation, protecting against apoptosis. Interacts with INPP5K; necessary for INPP5K localization at the endoplasmic reticulum. Interacts with MANF; the interaction is direct. Interacts with LOXL2; leading to activate the ERN1/IRE1-XBP1 pathway of the unfolded protein response. Interacts with CLU under stressed condition; interaction increases CLU protein stability; facilitates its retrotranslocation and redistribution to the mitochondria; cooperatively suppress stress-induced apoptosis by stabilizing mitochondrial membrane integrity. Interacts with CCDC47. Interacts with CLN3. Interacts with ELAPOR1; may regulate the function of HSPA5 in apoptosis and cell proliferation. Interacts with CASP7. Interacts with ILDR2; the interaction stabilizes ILDR2 expression. Interacts with ADAM7. As to quaternary structure, (Microbial infection) Interacts with Japanese encephalitis virus envelope protein E. (Microbial infection) Interacts with R.delemar invasin CotH3 on the surface of nasal epithelial cells. Interacts with R.delemar invasin CotH2. In terms of assembly, (Microbial infection) Interacts with Zika virus envelope protein E and non-structural protein 1 in a chaperone-client manner. AMPylated by FICD. In unstressed cells, AMPylation at Thr-518 by FICD inactivates the chaperome activity: AMPylated form is locked in a relatively inert state and only weakly stimulated by J domain-containing proteins. In response to endoplasmic reticulum stress, de-AMPylation by the same protein, FICD, restores the chaperone activity.

It localises to the endoplasmic reticulum lumen. It is found in the melanosome. The protein resides in the cytoplasm. The protein localises to the cell surface. The catalysed reaction is ATP + H2O = ADP + phosphate + H(+). The chaperone activity is regulated by ATP-induced allosteric coupling of the nucleotide-binding (NBD) and substrate-binding (SBD) domains. In the ADP-bound and nucleotide-free (apo) states, the two domains have little interaction. In contrast, in the ATP-bound state the two domains are tightly coupled, which results in drastically accelerated kinetics in both binding and release of polypeptide substrates. J domain-containing co-chaperones (DNAJB9/ERdj4 or DNAJC10/ERdj5) stimulate the ATPase activity and are required for efficient substrate recognition by HSPA5/BiP. Homooligomerization inactivates participating HSPA5/BiP protomers and probably act as reservoirs to store HSPA5/BiP molecules when they are not needed by the cell. In terms of biological role, endoplasmic reticulum chaperone that plays a key role in protein folding and quality control in the endoplasmic reticulum lumen. Involved in the correct folding of proteins and degradation of misfolded proteins via its interaction with DNAJC10/ERdj5, probably to facilitate the release of DNAJC10/ERdj5 from its substrate. Acts as a key repressor of the EIF2AK3/PERK and ERN1/IRE1-mediated unfolded protein response (UPR). In the unstressed endoplasmic reticulum, recruited by DNAJB9/ERdj4 to the luminal region of ERN1/IRE1, leading to disrupt the dimerization of ERN1/IRE1, thereby inactivating ERN1/IRE1. Also binds and inactivates EIF2AK3/PERK in unstressed cells. Accumulation of misfolded protein in the endoplasmic reticulum causes release of HSPA5/BiP from ERN1/IRE1 and EIF2AK3/PERK, allowing their homodimerization and subsequent activation. Plays an auxiliary role in post-translational transport of small presecretory proteins across endoplasmic reticulum (ER). May function as an allosteric modulator for SEC61 channel-forming translocon complex, likely cooperating with SEC62 to enable the productive insertion of these precursors into SEC61 channel. Appears to specifically regulate translocation of precursors having inhibitory residues in their mature region that weaken channel gating. May also play a role in apoptosis and cell proliferation. Its function is as follows. (Microbial infection) Plays an important role in viral binding to the host cell membrane and entry for several flaviruses such as Dengue virus, Zika virus and Japanese encephalitis virus. Acts as a component of the cellular receptor for Dengue virus serotype 2/DENV-2 on human liver cells. Functionally, (Microbial infection) Acts as a receptor for CotH proteins expressed by fungi of the order mucorales, the causative agent of mucormycosis, which plays an important role in epithelial cell invasion by the fungi. Acts as a receptor for R.delemar CotH3 in nasal epithelial cells, which may be an early step in rhinoorbital/cerebral mucormycosis (RCM) disease progression. The protein is Endoplasmic reticulum chaperone BiP of Homo sapiens (Human).